Reading from the N-terminus, the 58-residue chain is Large ribosomal subunit protein uL30 (58 aa).

It belongs to the universal ribosomal protein uL30 family. As to quaternary structure, part of the 50S ribosomal subunit.

This Vibrio vulnificus (strain CMCP6) protein is Large ribosomal subunit protein uL30.